The chain runs to 603 residues: Elongation factor 4 (603 aa).

The tr-type G domain occupies 7–189 (SRIRNFCIIA…SIVHLVPPPS (183 aa)). Residues 19–24 (DHGKST) and 136–139 (NKID) each bind GTP.

Belongs to the TRAFAC class translation factor GTPase superfamily. Classic translation factor GTPase family. LepA subfamily.

It is found in the cell inner membrane. The catalysed reaction is GTP + H2O = GDP + phosphate + H(+). Its function is as follows. Required for accurate and efficient protein synthesis under certain stress conditions. May act as a fidelity factor of the translation reaction, by catalyzing a one-codon backward translocation of tRNAs on improperly translocated ribosomes. Back-translocation proceeds from a post-translocation (POST) complex to a pre-translocation (PRE) complex, thus giving elongation factor G a second chance to translocate the tRNAs correctly. Binds to ribosomes in a GTP-dependent manner. The sequence is that of Elongation factor 4 from Crocosphaera subtropica (strain ATCC 51142 / BH68) (Cyanothece sp. (strain ATCC 51142)).